The sequence spans 105 residues: Large ribosomal subunit protein uL24 (105 aa).

The disordered stretch occupies residues 75–105; it reads DSDGNPTRVGYRTDEESGKRVRISRKNGKDI. A compositionally biased stretch (basic residues) spans 94–105; sequence RVRISRKNGKDI.

Belongs to the universal ribosomal protein uL24 family. In terms of assembly, part of the 50S ribosomal subunit.

One of two assembly initiator proteins, it binds directly to the 5'-end of the 23S rRNA, where it nucleates assembly of the 50S subunit. Functionally, one of the proteins that surrounds the polypeptide exit tunnel on the outside of the subunit. This Rhodococcus jostii (strain RHA1) protein is Large ribosomal subunit protein uL24.